A 247-amino-acid chain; its full sequence is 3-oxoacyl-[acyl-carrier-protein] reductase (247 aa).

Position 11–35 (V11–V35) interacts with NADP(+). S143 contributes to the substrate binding site. The active-site Proton acceptor is Y156.

This sequence belongs to the short-chain dehydrogenases/reductases (SDR) family.

It carries out the reaction a (3R)-hydroxyacyl-[ACP] + NADP(+) = a 3-oxoacyl-[ACP] + NADPH + H(+). Its pathway is lipid metabolism; fatty acid biosynthesis. In terms of biological role, catalyzes the NADPH-dependent reduction of beta-ketoacyl-ACP substrates to beta-hydroxyacyl-ACP products, the first reductive step in the elongation cycle of fatty acid biosynthesis. Is capable of reducing acetoacetyl-CoA, but less well than its paralog PhaB. This is 3-oxoacyl-[acyl-carrier-protein] reductase (fabG) from Synechocystis sp. (strain ATCC 27184 / PCC 6803 / Kazusa).